The chain runs to 1342 residues: DNA-directed RNA polymerase subunit beta (1342 aa).

The protein belongs to the RNA polymerase beta chain family. The RNAP catalytic core consists of 2 alpha, 1 beta, 1 beta' and 1 omega subunit. When a sigma factor is associated with the core the holoenzyme is formed, which can initiate transcription.

It carries out the reaction RNA(n) + a ribonucleoside 5'-triphosphate = RNA(n+1) + diphosphate. Functionally, DNA-dependent RNA polymerase catalyzes the transcription of DNA into RNA using the four ribonucleoside triphosphates as substrates. This chain is DNA-directed RNA polymerase subunit beta, found in Proteus mirabilis (strain HI4320).